Consider the following 359-residue polypeptide: Uroporphyrinogen decarboxylase (359 aa).

Substrate contacts are provided by residues R36 to R40, D85, Y160, S215, and H338.

It belongs to the uroporphyrinogen decarboxylase family. Homodimer.

It is found in the cytoplasm. It carries out the reaction uroporphyrinogen III + 4 H(+) = coproporphyrinogen III + 4 CO2. The protein operates within porphyrin-containing compound metabolism; protoporphyrin-IX biosynthesis; coproporphyrinogen-III from 5-aminolevulinate: step 4/4. Functionally, catalyzes the decarboxylation of four acetate groups of uroporphyrinogen-III to yield coproporphyrinogen-III. This Corynebacterium efficiens (strain DSM 44549 / YS-314 / AJ 12310 / JCM 11189 / NBRC 100395) protein is Uroporphyrinogen decarboxylase.